A 500-amino-acid chain; its full sequence is Chromosomal replication initiator protein DnaA (500 aa).

The tract at residues 1–81 (MVNASGDPVI…LQALRTVTGE (81 aa)) is domain I, interacts with DnaA modulators. The segment at 81–155 (ENMFPAFKVV…QQKMNRDPET (75 aa)) is domain II. The interval 156–377 (HLNKNFTFDS…GALTRVTAVA (222 aa)) is domain III, AAA+ region. The ATP site is built by glycine 200, glycine 202, lysine 203, and threonine 204. The segment at 378 to 500 (SLSNQPVTRA…TVRLKQSNTN (123 aa)) is domain IV, binds dsDNA.

It belongs to the DnaA family. In terms of assembly, oligomerizes as a right-handed, spiral filament on DNA at oriC.

The protein resides in the cytoplasm. Plays an essential role in the initiation and regulation of chromosomal replication. ATP-DnaA binds to the origin of replication (oriC) to initiate formation of the DNA replication initiation complex once per cell cycle. Binds the DnaA box (a 9 base pair repeat at the origin) and separates the double-stranded (ds)DNA. Forms a right-handed helical filament on oriC DNA; dsDNA binds to the exterior of the filament while single-stranded (ss)DNA is stabiized in the filament's interior. The ATP-DnaA-oriC complex binds and stabilizes one strand of the AT-rich DNA unwinding element (DUE), permitting loading of DNA polymerase. After initiation quickly degrades to an ADP-DnaA complex that is not apt for DNA replication. Binds acidic phospholipids. The protein is Chromosomal replication initiator protein DnaA of Bifidobacterium longum subsp. infantis (strain ATCC 15697 / DSM 20088 / JCM 1222 / NCTC 11817 / S12).